The chain runs to 305 residues: uncharacterized protein (305 aa).

A disordered region spans residues 267–287 (ADEQEKNWNGGAKKNARAEPA).

The protein belongs to the DnaB/DnaD family.

This is an uncharacterized protein from Listeria innocua serovar 6a (strain ATCC BAA-680 / CLIP 11262).